The chain runs to 636 residues: Transcription termination factor FttA (636 aa).

Positions 4 to 72 are KHa; the sequence is ELELKRIRDE…VVFRWNVDKR (69 aa). The tract at residues 73–140 is KHb; the sequence is KDPAETKDYI…WQPKTIRTPP (68 aa). The tract at residues 181 to 383 is metallo-beta-lactamase N-terminus; sequence NIRMNALGGF…LLIEATYGGP (203 aa). His-242, His-244, Asp-246, His-247, His-329, and Asp-352 together coordinate Zn(2+). The interval 384-577 is beta-Casp; sequence QDRIPSRQES…LKVFTLEGFS (194 aa). The segment at 578 to 636 is metallo-beta-lactamase C-terminus; sequence GHSSRSQISQFLRRIQPRPKVVIVNHGEESKCVSLSTMIHKKLRKSTKSPKNLEVVLLK. A Zn(2+)-binding site is contributed by His-603.

This sequence belongs to the metallo-beta-lactamase superfamily. RNA-metabolizing metallo-beta-lactamase-like family. FttA subfamily. In terms of assembly, homodimer. Interacts with RNA polymerase (RNAP), interacts with the Spt4-Spt5 complex. Requires Zn(2+) as cofactor.

Its function is as follows. Terminates transcription on the whole genome. Termination is linked to FttA-mediated RNA cleavage and does not require NTP hydrolysis. Cleaves endonucleolytically at the RNA exit channel of RNA polymerase (RNAP); the 5'-3' exonuclease activity of this protein degrades the nascent RNA released from RNAP. Functionally, terminates transcription genome-wide in M.maripaludis. Restores wild-type growth to a strain of Methanococcus maripaludis depleted for this gene at 22 degrees Celsius and prevents transcriptional read-through. Transcription termination is most effective in vivo on RNAs with more than one U4-tract in their 3'-ends. Has endonuclease activity after U-rich tracts in transcription termination sequences. In Lokiarchaeum sp. (strain GC14_75), this protein is Transcription termination factor FttA.